Reading from the N-terminus, the 166-residue chain is Early E3 18.5 kDa glycoprotein (166 aa).

The signal sequence occupies residues 1–19 (MGPILVLLVLLSLLEAGSA). Topologically, residues 20-131 (NYDPCLDFDP…SKDNIVTFSI (112 aa)) are lumenal. An N-linked (GlcNAc...) asparagine; by host glycan is attached at asparagine 31. Disulfide bonds link cysteine 32–cysteine 50 and cysteine 44–cysteine 106. 3 N-linked (GlcNAc...) asparagine; by host glycosylation sites follow: asparagine 63, asparagine 67, and asparagine 97. A helical membrane pass occupies residues 132 to 152 (AYCLCACLLTALLCVCIHLLV). Residues 153–166 (TTRIKNANNKEKMP) are Cytoplasmic-facing. The short motif at 162–166 (KEKMP) is the Di-lysine motif element.

It belongs to the adenoviridae E19 family. Both disulfide bonds are absolutely critical for the interaction with MHC antigens. Post-translationally, N-glycosylated; high-mannose.

It is found in the host endoplasmic reticulum membrane. Binds and retains class I heavy chains in the endoplasmic reticulum during the early period of virus infection, thereby impairing their transport to the cell surface. Also delays the expression of class I alleles that it cannot affect by direct retention. Binds transporters associated with antigen processing (TAP) and acts as a tapasin inhibitor, preventing class I/TAP association. In consequence, infected cells are masked for immune recognition by cytotoxic T-lymphocytes. The sequence is that of Early E3 18.5 kDa glycoprotein from Human adenovirus B serotype 11 (strain BC34) (HAdV-11).